A 457-amino-acid polypeptide reads, in one-letter code: ATP-dependent protease ATPase subunit HslU (457 aa).

ATP-binding positions include Ile-18 and 60–65 (GVGKTE). Positions 142-171 (KQPGMGFFNPAAPEEQEEQPSADQSSTREK) are disordered. Residues Asp-269, Glu-335, and Arg-407 each coordinate ATP.

The protein belongs to the ClpX chaperone family. HslU subfamily. A double ring-shaped homohexamer of HslV is capped on each side by a ring-shaped HslU homohexamer. The assembly of the HslU/HslV complex is dependent on binding of ATP.

The protein resides in the cytoplasm. Functionally, ATPase subunit of a proteasome-like degradation complex; this subunit has chaperone activity. The binding of ATP and its subsequent hydrolysis by HslU are essential for unfolding of protein substrates subsequently hydrolyzed by HslV. HslU recognizes the N-terminal part of its protein substrates and unfolds these before they are guided to HslV for hydrolysis. The chain is ATP-dependent protease ATPase subunit HslU from Maridesulfovibrio salexigens (strain ATCC 14822 / DSM 2638 / NCIMB 8403 / VKM B-1763) (Desulfovibrio salexigens).